The following is a 986-amino-acid chain: E3 ubiquitin-protein ligase Arkadia (986 aa).

Residues lysine 19, lysine 28, lysine 34, lysine 47, lysine 59, lysine 73, lysine 87, lysine 96, and lysine 110 each participate in a glycyl lysine isopeptide (Lys-Gly) (interchain with G-Cter in SUMO2) cross-link. Over residues 66 to 89 (HLCDDSQKQEKDMNGNQQEQEKSL) the composition is skewed to basic and acidic residues. The interval 66-106 (HLCDDSQKQEKDMNGNQQEQEKSLVVRKKRKSQQAGPSYVQ) is disordered. The segment at 120 to 191 (QHLGTPSDED…HKWPRTETES (72 aa)) is disordered. Low complexity predominate over residues 132–151 (SSFSDCLSSPSSSLHFGDSD). Over residues 164-173 (RHSQTILNAK) the composition is skewed to polar residues. Lysine 173 participates in a covalent cross-link: Glycyl lysine isopeptide (Lys-Gly) (interchain with G-Cter in SUMO2). Residues 174 to 184 (SRSHSARSHKW) are compositionally biased toward basic residues. Residues lysine 198 and lysine 218 each participate in a glycyl lysine isopeptide (Lys-Gly) (interchain with G-Cter in SUMO2) cross-link. The tract at residues 241–404 (VLARRKYALL…VPTTSARMES (164 aa)) is interaction with AXIN1. A disordered region spans residues 248 to 277 (ALLPSSSSSSENDLSSESSSSSSTEGEEDL). Low complexity predominate over residues 252 to 271 (SSSSSSENDLSSESSSSSST). An SUMO interaction motif 1 (SIM) motif is present at residues 300–304 (VVVIE). Residues 325–331 (EVEIVTV) carry the SUMO interaction motif 2 (SIM) motif. The segment at 337 to 373 (SRSTLGHSRSHWSQGSSSHASRPQEPRNRSRISTVIQ) is disordered. A compositionally biased stretch (low complexity) spans 347 to 357 (HWSQGSSSHAS). The SUMO interaction motif 3 (SIM) signature appears at 382-386 (VVDLT). 5 disordered regions span residues 389–471 (EDEP…ETGP), 506–561 (QQHG…SYHE), 610–646 (APSQ…RHYM), 659–684 (HQAS…VDYV), and 696–719 (ISSH…TAAP). Residues 395–466 (VPTTSARMES…DSRRTTSSAV (72 aa)) show a composition bias toward polar residues. A compositionally biased stretch (basic residues) spans 508–522 (HGHHFQHHHHHHHTP). Polar residues predominate over residues 551 to 561 (ANSSSGTSYHE). The span at 670 to 680 (NPPPQTQPPPQ) shows a compositional bias: pro residues. Residues 907–909 (YPH) are ubiquitin binding. Residues lysine 915 and lysine 919 each participate in a glycyl lysine isopeptide (Lys-Gly) (interchain with G-Cter in SUMO2) cross-link. Zn(2+)-binding residues include cysteine 934 and cysteine 937. An RING-type; atypical zinc finger spans residues 934 to 975 (CTICLSILEEGEDVRRLPCMHLFHQVCVDQWLITNKKCPICR). The ubiquitin binding stretch occupies residues 949–953 (RLPCM). The Zn(2+) site is built by histidine 957 and cysteine 960.

It belongs to the Arkadia family. Monomer. Interacts with SMAD6, SMAD7, AXIN1, AXIN2 and SKIL isoform SNON. Interacts with (phosphorylated) SMAD2 and SMAD3. Part of a complex containing RNF111, AXIN1 and SMAD7. Interacts (via SIM domains) with SUMO1 and SUMO2.

It localises to the nucleus. The protein resides in the cytoplasm. The protein localises to the PML body. The catalysed reaction is S-ubiquitinyl-[E2 ubiquitin-conjugating enzyme]-L-cysteine + [acceptor protein]-L-lysine = [E2 ubiquitin-conjugating enzyme]-L-cysteine + N(6)-ubiquitinyl-[acceptor protein]-L-lysine.. The protein operates within protein modification; protein ubiquitination. Its activity is regulated as follows. Binds free ubiquitin non-covalently via its RING-type zinc finger. Ubiquitin-binding leads to enhance the E3 ubiquitin-protein ligase activity by stabilizing the ubiquitin-conjugating enzyme E2 (donor ubiquitin) in the 'closed' conformation and activating ubiquitin transfer. Its function is as follows. E3 ubiquitin-protein ligase. Required for mesoderm patterning during embryonic development. Acts as an enhancer of the transcriptional responses of the SMAD2/SMAD3 effectors, which are activated downstream of BMP. Acts by mediating ubiquitination and degradation of SMAD inhibitors such as SMAD7, inducing their proteasomal degradation and thereby enhancing the transcriptional activity of TGF-beta and BMP. In addition to enhance transcription of SMAD2/SMAD3 effectors, also regulates their turnover by mediating their ubiquitination and subsequent degradation, coupling their activation with degradation, thereby ensuring that only effectors 'in use' are degraded. Activates SMAD3/SMAD4-dependent transcription by triggering signal-induced degradation of SNON isoform of SKIL. Associates with UBE2D2 as an E2 enzyme. Specifically binds polysumoylated chains via SUMO interaction motifs (SIMs) and mediates ubiquitination of sumoylated substrates. Catalyzes 'Lys-63'-linked ubiquitination of sumoylated XPC in response to UV irradiation, promoting nucleotide excision repair. Mediates ubiquitination and degradation of sumoylated PML. The regulation of the BMP-SMAD signaling is however independent of sumoylation and is not dependent of SUMO interaction motifs (SIMs). The sequence is that of E3 ubiquitin-protein ligase Arkadia (RNF111) from Pongo abelii (Sumatran orangutan).